The chain runs to 1423 residues: Protein phosphatase Slingshot homolog 2 (1423 aa).

Disordered regions lie at residues 1–37 and 51–70; these read MALVTVQRSPTPSTTSSPCASEADSGEEECRSQPRSI and LPRGNGSSTPRVSHRRNKHA. Positions 9–18 are enriched in low complexity; the sequence is SPTPSTTSSP. Serine 17, serine 25, and serine 36 each carry phosphoserine. The region spanning 248–303 is the DEK-C domain; that stretch reads ERTERLIKTKLREIMMQKDLENITSKEIRTELEMQMVCNLREFKEFIDNEMIVILG. The Tyrosine-protein phosphatase domain occupies 307 to 448; the sequence is SPTQIFEHVF…LEEYQGILLA (142 aa). Residue cysteine 392 is the Phosphocysteine intermediate of the active site. 5 positions are modified to phosphoserine: serine 461, serine 487, serine 534, serine 631, and serine 633. Disordered stretches follow at residues 698–725, 833–858, 878–950, 967–991, 1021–1042, 1074–1105, and 1207–1226; these read EMAADDQRSSSLSNTPHASEESSVDEDQ, HSSTADLEEEEPVEGEHDWGPGMHSG, RQEQ…HCER, APQDCLGSDSRSKKQEGDLKKQRAV, SLGHTEPGGEATPSKEGEKQGL, PQVLPLPHSSSECDRPADPNPMLSSPQDKGDC, and PEACRIPHSSSSENIRDLSH. Over residues 884 to 904 the composition is skewed to polar residues; that stretch reads HGTASAGPTLSNRKNSKNDSS. Composition is skewed to basic and acidic residues over residues 910–932, 976–987, and 1033–1042; these read PKWKSDETTPEHSFFLKEAEPSK, SRSKKQEGDLKK, and PSKEGEKQGL. Serine 1217 bears the Phosphoserine mark. Phosphothreonine is present on threonine 1422.

This sequence belongs to the protein-tyrosine phosphatase family. In terms of assembly, interacts with filamentous actin. Expressed in brain, heart, liver, skeletal muscle, testis and thymus. Also expressed at lower levels in kidney, small intestine and spleen. Within testicular seminiferous tubules expressed in germ cells and spermatocytes, where it has a cytoplasmic localization, and round spermatids, where it concentrates in the acrosomal region next to the nucleus.

The protein localises to the cytoplasm. The protein resides in the cytoskeleton. It is found in the cell junction. It localises to the focal adhesion. Its subcellular location is the cytoplasmic vesicle. The protein localises to the secretory vesicle. The protein resides in the acrosome. The enzyme catalyses O-phospho-L-tyrosyl-[protein] + H2O = L-tyrosyl-[protein] + phosphate. The catalysed reaction is O-phospho-L-seryl-[protein] + H2O = L-seryl-[protein] + phosphate. It catalyses the reaction O-phospho-L-threonyl-[protein] + H2O = L-threonyl-[protein] + phosphate. Its function is as follows. Protein phosphatase which regulates actin filament dynamics. Dephosphorylates and activates the actin binding/depolymerizing factor cofilin, which subsequently binds to actin filaments and stimulates their disassembly. Inhibitory phosphorylation of cofilin is mediated by LIMK1, which may also be dephosphorylated and inactivated by this protein. Required for spermatogenesis. Involved in acrosome biogenesis, probably by regulating cofilin-mediated actin cytoskeleton remodeling during proacrosomal vesicle fusion and/or Golgi to perinuclear vesicle trafficking. The sequence is that of Protein phosphatase Slingshot homolog 2 (Ssh2) from Mus musculus (Mouse).